Consider the following 183-residue polypeptide: Photosystem II extrinsic protein V (183 aa).

The first 31 residues, 1–31, serve as a signal peptide directing secretion; the sequence is MTFGHCRRASTLRSAFVLGLCGLLLAGCSGA. Residues C84, C87, H88, and C138 each contribute to the heme c site.

This sequence belongs to the cytochrome c family. PsbV subfamily. PSII is composed of 1 copy each of membrane proteins PsbA, PsbB, PsbC, PsbD, PsbE, PsbF, PsbH, PsbI, PsbJ, PsbK, PsbL, PsbM, PsbT, PsbX, Psb30/Ycf12, peripheral proteins PsbO, CyanoQ (PsbQ), PsbU, PsbV and a large number of cofactors. It forms dimeric complexes. Heme c serves as cofactor.

It is found in the cell inner membrane. Probably one of the extrinsic, lumenal subunits of photosystem II (PSII). PSII is a light-driven water plastoquinone oxidoreductase, using light energy to abstract electrons from H(2)O, generating a proton gradient subsequently used for ATP formation. The extrinsic proteins stabilize the structure of photosystem II oxygen-evolving complex (OEC), the ion environment of oxygen evolution and protect the OEC against heat-induced inactivation. Low-potential cytochrome c that plays a role in the OEC of PSII. The chain is Photosystem II extrinsic protein V (psbV1) from Gloeobacter violaceus (strain ATCC 29082 / PCC 7421).